The following is a 21-amino-acid chain: Snake venom serine protease jerdonase (21 aa).

One can recognise a Peptidase S1 domain in the interval 1 to 21 (IIGGDECNINEHPFLVALYDA).

Belongs to the peptidase S1 family. Snake venom subfamily. In terms of assembly, monomer. Glycosylated; contains 35.8% neutral carbohydrate. Expressed by the venom gland.

The protein localises to the secreted. With respect to regulation, inhibited by PMSF and soybean trypsin inhibitor. Partially inhibited by L-cysteine and DTT. Not affected by EDTA. Functionally, multifunctional venom serine protease that has fibrino(geno)lytic activity towards the A alpha-chain of human fibrinogen (FGA) and a slow activity towards the B beta-chain (FGB). Also hydrolyzes bovine low-molecular-mass kininogen and releases bradykinin. Catalyzes the hydrolysis of BAEE, S-2238 and S-2302. This is Snake venom serine protease jerdonase from Protobothrops jerdonii (Jerdon's pitviper).